The chain runs to 245 residues: 1-(5-phosphoribosyl)-5-[(5-phosphoribosylamino)methylideneamino] imidazole-4-carboxamide isomerase (245 aa).

The active-site Proton acceptor is the aspartate 7. Aspartate 129 (proton donor) is an active-site residue.

The protein belongs to the HisA/HisF family.

It localises to the cytoplasm. The enzyme catalyses 1-(5-phospho-beta-D-ribosyl)-5-[(5-phospho-beta-D-ribosylamino)methylideneamino]imidazole-4-carboxamide = 5-[(5-phospho-1-deoxy-D-ribulos-1-ylimino)methylamino]-1-(5-phospho-beta-D-ribosyl)imidazole-4-carboxamide. It functions in the pathway amino-acid biosynthesis; L-histidine biosynthesis; L-histidine from 5-phospho-alpha-D-ribose 1-diphosphate: step 4/9. The chain is 1-(5-phosphoribosyl)-5-[(5-phosphoribosylamino)methylideneamino] imidazole-4-carboxamide isomerase from Proteus mirabilis (strain HI4320).